Reading from the N-terminus, the 335-residue chain is Trans-3-hydroxy-L-proline dehydratase (335 aa).

Catalysis depends on cysteine 91, which acts as the Proton acceptor. Substrate-binding positions include 92-93 (GH), histidine 222, and 256-257 (GS).

It belongs to the proline racemase family. As to quaternary structure, homodimer.

It catalyses the reaction trans-3-hydroxy-L-proline = 1-pyrroline-2-carboxylate + H2O. In terms of biological role, catalyzes the dehydration of trans-3-hydroxy-L-proline (t3LHyp) to Delta(1)-pyrroline-2-carboxylate (Pyr2C). Does not possess neither proline racemase nor 4-hydroxyproline 2-epimerase activities. This chain is Trans-3-hydroxy-L-proline dehydratase, found in Burkholderia cenocepacia (strain HI2424).